Reading from the N-terminus, the 448-residue chain is Glucose-6-phosphate isomerase (448 aa).

The active-site Proton donor is glutamate 290. Active-site residues include histidine 311 and lysine 425.

Belongs to the GPI family.

It localises to the cytoplasm. It catalyses the reaction alpha-D-glucose 6-phosphate = beta-D-fructose 6-phosphate. It functions in the pathway carbohydrate biosynthesis; gluconeogenesis. It participates in carbohydrate degradation; glycolysis; D-glyceraldehyde 3-phosphate and glycerone phosphate from D-glucose: step 2/4. In terms of biological role, catalyzes the reversible isomerization of glucose-6-phosphate to fructose-6-phosphate. The protein is Glucose-6-phosphate isomerase of Levilactobacillus brevis (strain ATCC 367 / BCRC 12310 / CIP 105137 / JCM 1170 / LMG 11437 / NCIMB 947 / NCTC 947) (Lactobacillus brevis).